We begin with the raw amino-acid sequence, 438 residues long: Probable D-serine dehydratase (438 aa).

Lysine 114 carries the N6-(pyridoxal phosphate)lysine modification.

This sequence belongs to the serine/threonine dehydratase family. DsdA subfamily. Requires pyridoxal 5'-phosphate as cofactor.

The catalysed reaction is D-serine = pyruvate + NH4(+). This chain is Probable D-serine dehydratase, found in Histophilus somni (strain 2336) (Haemophilus somnus).